Here is a 339-residue protein sequence, read N- to C-terminus: IQPARRHTKNTNMAKHTTKGTGHSMFISPRKIAHIPQINCEKQKLVLEVRSIYNDSWRVRGVLPFMINDFINQLNLTGKYRFGPVVYYQINIKEIPPLIYDVIRMEASKGYLWLDERNLDTHSLIGVYKCRVPMDLLVLKGLSNVILTTVNKAQPNISKFKDLKAMHYAFLNRQENVVKVVSIDLSDCMDYIPTSRILTSQKFTKQYGLYYNLVEWIIDLPIYDFHNHSFFPSTGITPIGEITHVILHNFYQNTVDSLLESWYPGITYSRYGHELFILCKQTDEFTIDDCDIDNILEVLDLYSVDINWSSDGLLMADNNDKALILHEDGSLEVWNSEDI.

Positions 1–24 (IQPARRHTKNTNMAKHTTKGTGHS) are disordered. The segment covering 10 to 21 (NTNMAKHTTKGT) has biased composition (polar residues).

The protein localises to the mitochondrion. This is an uncharacterized protein from Zea mays (Maize).